A 488-amino-acid chain; its full sequence is Protein Notchless (488 aa).

Residues 1-22 (MLAKKQKMQETDTEQEATPHTI) form a disordered region. Positions 19–101 (PHTIQARLVS…VIDIVYQPQA (83 aa)) are ubiquitin-like (UBL) domain. WD repeat units follow at residues 117–156 (GHAEAVVSLNFSPDGAHLASGSGDTTVRLWDLNTETPHFT), 159–198 (GHKQWVLCVSWAPDGKRLASGCKAGSIIIWDPETGQQKGR), 202–246 (GHKK…CLMN), 249–287 (GHTNAVTAVRWGGAGLIYTSSKDRTVKMWRAADGILCRT), 329–370 (LQES…CVER), 373–412 (GHQNVVNDVKYSPDVKLIASASFDKSVRLWRASDGQYMAT), 415–454 (GHVQAVYTVAWSADSRLIVSGSKDSTLKVWSVQTKKLAQE), and 457–488 (GHADEVFGVDWAPDGSRVASGGKDKVIKLWAY).

It belongs to the NLE1/RSA4 family. As to quaternary structure, interacts with Notch (via cytoplasmic domain). Associates with the pre-60S ribosomal particle.

It localises to the nucleus. The protein localises to the nucleolus. Its function is as follows. Plays a role in regulating Notch activity. The polypeptide is Protein Notchless (Drosophila melanogaster (Fruit fly)).